Reading from the N-terminus, the 350-residue chain is S-adenosylmethionine:tRNA ribosyltransferase-isomerase (350 aa).

Belongs to the QueA family. As to quaternary structure, monomer.

The protein localises to the cytoplasm. The catalysed reaction is 7-aminomethyl-7-carbaguanosine(34) in tRNA + S-adenosyl-L-methionine = epoxyqueuosine(34) in tRNA + adenine + L-methionine + 2 H(+). Its pathway is tRNA modification; tRNA-queuosine biosynthesis. Functionally, transfers and isomerizes the ribose moiety from AdoMet to the 7-aminomethyl group of 7-deazaguanine (preQ1-tRNA) to give epoxyqueuosine (oQ-tRNA). This Vibrio campbellii (strain ATCC BAA-1116) protein is S-adenosylmethionine:tRNA ribosyltransferase-isomerase.